Consider the following 436-residue polypeptide: MYHPRELYPSLGTGYRLGHPQPGADSTFPPALTEGYRYPDLDTSKLDCFLSGIEAAPHTLAAPPPLPLLPSALGPETAPPPPEALHSLPGVSLSLENQELWKEFSAVGTEMIITKAGRRMFPACRVSVTGLDPEARYLFLLDVVPVDGARYRWQGQHWEPSGKAEPRLPDRVYIHPDSPATGAHWMRQPVSFHRVKLTNSTLDPHGHLILHSMHKYQPRIHLVRATQLCSQHWGGVASFRFPETTFISVTAYQNPRITQLKIAANPFAKGFRENGRNCKRERDARVKRKLRGPEPVATEACGSGDTPGGPCDSTLGGDIRDSDPEPAPTPQEAASASAPPCGGPSAEAYLLHPAAFHGAPSHLPARTPSFPEAPDPGRPAPYSAAFLELQPGPGSSAYQTTPSVTPFAPHFIQGAPFPLPYPGPGGYLDMGSKQMY.

The disordered stretch occupies residues P67–S87. Positions L100–E273 form a DNA-binding region, T-box. Residues G275–A284 are compositionally biased toward basic and acidic residues. 2 disordered regions span residues G275–P344 and P360–S383. The span at E332–P344 shows a compositional bias: low complexity.

Its subcellular location is the nucleus. Its function is as follows. T-box transcription factor that plays an essential role in the determination of the fate of axial stem cells: neural vs mesodermal. Acts in part by down-regulating, a specific enhancer (N1) of SOX2, to inhibit neural development. Seems to also play an essential role in left/right axis determination and acts through effects on Notch signaling around the node as well as through an effect on the morphology and motility of the nodal cilia. This Rattus norvegicus (Rat) protein is T-box transcription factor TBX6 (Tbx6).